Consider the following 98-residue polypeptide: N(2)-fixation sustaining protein CowN (98 aa).

Belongs to the CowN family.

Functionally, is required to sustain N(2)-dependent growth in the presence of low levels of carbon monoxide (CO). Probably acts by protecting the N(2) fixation ability of the nitrogenase complex, which is inactivated in the presence of CO. The chain is N(2)-fixation sustaining protein CowN from Dechloromonas aromatica (strain RCB).